The chain runs to 212 residues: Negative modulator of initiation of replication (212 aa).

2 interaction with DNA regions span residues 113 to 114 and 144 to 148; these read AV and RTRVY.

It belongs to the SeqA family. In terms of assembly, homodimer. Polymerizes to form helical filaments.

It is found in the cytoplasm. Negative regulator of replication initiation, which contributes to regulation of DNA replication and ensures that replication initiation occurs exactly once per chromosome per cell cycle. Binds to pairs of hemimethylated GATC sequences in the oriC region, thus preventing assembly of replication proteins and re-initiation at newly replicated origins. Repression is relieved when the region becomes fully methylated. In Actinobacillus succinogenes (strain ATCC 55618 / DSM 22257 / CCUG 43843 / 130Z), this protein is Negative modulator of initiation of replication.